We begin with the raw amino-acid sequence, 208 residues long: Cysteine-rich protein 2 (208 aa).

The 53-residue stretch at 5 to 57 (CPKCDKTVCFAEKVSSLGKDWHKFCLKCERCSKTLTPGGHAEHDGKPFCHKPC) folds into the LIM zinc-binding 1 domain. At Lys23 the chain carries N6-acetyllysine. Residues 98–119 (AEERKASGPPKGPSRASSVTTF) are disordered. Ser104 bears the Phosphoserine mark. The LIM zinc-binding 2 domain maps to 126–178 (CPRCSKKVYFAEKVTSLGKDWHRPCLHCERCGKTLTPGGHAEHDGQPYCHKPC). Lys138 and Lys144 each carry N6-acetyllysine.

In terms of assembly, interacts with TGFB1I1.

The polypeptide is Cysteine-rich protein 2 (CRIP2) (Pongo abelii (Sumatran orangutan)).